The sequence spans 272 residues: MRQVAIYGKGGIGKSTTTQNLTSGLAELGKKIMVVGCDPKADSTRLLLGGLAQKTVLDTLREEGEDVDLDTIMKTGFGNIKCVESGGPEPGVGCAGRGIITSINMLEQLGAYEDELDYVFYDVLGDVVCGGFAMPIREGKAKEIYIVASGEMMAMYAANNISKGISKFANTGGVRLGGIICNSRKVKNEKELLEAFAKELGTQLIYFVPRSHEVQKAEINKQTVIQFNPKDEQADEYRALAKAIDGNDMYVVPKPMAQDKLEAILMEYGLLE.

8–15 (GKGGIGKS) is an ATP binding site. Residue C94 coordinates [4Fe-4S] cluster. The residue at position 97 (R97) is an ADP-ribosylarginine; by dinitrogenase reductase ADP-ribosyltransferase. C129 provides a ligand contact to [4Fe-4S] cluster.

It belongs to the NifH/BchL/ChlL family. Homodimer. [4Fe-4S] cluster is required as a cofactor. In terms of processing, the reversible ADP-ribosylation of Arg-97 inactivates the nitrogenase reductase and regulates nitrogenase activity.

It catalyses the reaction N2 + 8 reduced [2Fe-2S]-[ferredoxin] + 16 ATP + 16 H2O = H2 + 8 oxidized [2Fe-2S]-[ferredoxin] + 2 NH4(+) + 16 ADP + 16 phosphate + 6 H(+). Its function is as follows. The key enzymatic reactions in nitrogen fixation are catalyzed by the nitrogenase complex, which has 2 components: the iron protein and the molybdenum-iron protein. This chain is Nitrogenase iron protein, found in Clostridium acetobutylicum (strain ATCC 824 / DSM 792 / JCM 1419 / IAM 19013 / LMG 5710 / NBRC 13948 / NRRL B-527 / VKM B-1787 / 2291 / W).